The sequence spans 1792 residues: Non-reducing polyketide synthase aptA (1792 aa).

The N-terminal acylcarrier protein transacylase domain (SAT) stretch occupies residues 1–395; sequence MKDNTHSTTL…PRSFAHSKLA (395 aa). The region spanning 391–824 is the Ketosynthase family 3 (KS3) domain; it reads HSKLAVVGMA…GGNTTVLLED (434 aa). Residues Cys-564, His-699, and His-742 each act as for beta-ketoacyl synthase activity in the active site. Residues 926–1243 are malonyl-CoA:ACP transacylase (MAT) domain; that stretch reads VFAFTGQGAF…NLVALHLAGC (318 aa). Positions 1308–1625 are product template (PT) domain; that stretch reads TSLIHEIIEE…PRLLMDRFFS (318 aa). The N-terminal hotdog fold stretch occupies residues 1312 to 1447; that stretch reads HEIIEETIGE…GSVRFEADAE (136 aa). In terms of domain architecture, PKS/mFAS DH spans 1312–1621; it reads HEIIEETIGE…FRRVPRLLMD (310 aa). Catalysis depends on His-1344, which acts as the Proton acceptor; for dehydratase activity. The segment at 1475-1621 is C-terminal hotdog fold; sequence QASQLSKALS…FRRVPRLLMD (147 aa). Asp-1533 serves as the catalytic Proton donor; for dehydratase activity. Residues 1634–1649 show a composition bias toward low complexity; sequence VAASASSAPKTATKHA. The segment at 1634–1716 is disordered; it reads VAASASSAPK…GPNGTTSQPE (83 aa). The span at 1664-1684 shows a compositional bias: polar residues; it reads TPSSLPTVQAQNTSPPQQVTP. The segment covering 1694-1705 has biased composition (basic and acidic residues); the sequence is TPEEEKPGKADA. In terms of domain architecture, Carrier spans 1715 to 1792; sequence PEATGVVGQC…DMMDWLEQYC (78 aa). Ser-1752 carries the O-(pantetheine 4'-phosphoryl)serine modification.

Requires pantetheine 4'-phosphate as cofactor.

The catalysed reaction is holo-[ACP] + 8 malonyl-CoA + acetyl-CoA + 8 H(+) = 3,6,8,9-tetrahydroxy-1-oxo-3-(2-oxopropyl)-1,2,3,4-tetrahydroanthracene-2-carboxyl-[ACP] + 8 CO2 + 9 CoA + 2 H2O. It functions in the pathway secondary metabolite biosynthesis. Non-reducing polyketide synthase (NRPKS); part of the gene cluster that mediates the biosynthesis of asperthecin, an anthraquinone pigment. Catalyzes the formation of the aromatic polyketide from acetyl coenzyme A and seven malonyl coenzyme A molecules. Through its product template (PT) domain, catalyzes the cyclization of the polyketide backbone via C6-C11 aldolcondensation. Polyketide is subsequently hydrolyzed from the NRPKS by the action of the hydrolase aptB into endocrocin-9-anthrone. Endocrocin-9-anthrone is then oxidized into endocrocin by aptC. Endocrocin is likely to decarboxylate spontaneously to form emodin which explains why there is no decarboxylase in the asperthecin biosynthesis cluster. Finally, aptC or another endogenous oxygenase catalyzes additional oxidation steps to form asperthecin. The polypeptide is Non-reducing polyketide synthase aptA (Emericella nidulans (strain FGSC A4 / ATCC 38163 / CBS 112.46 / NRRL 194 / M139) (Aspergillus nidulans)).